Consider the following 333-residue polypeptide: Ketol-acid reductoisomerase (NADP(+)) (333 aa).

In terms of domain architecture, KARI N-terminal Rossmann spans 2-182 (AELFYDDDAD…GGTRAGVIKT (181 aa)). NADP(+)-binding positions include 25 to 28 (YGSQ), serine 51, serine 53, and 83 to 86 (DPIQ). The active site involves histidine 108. Position 134 (glycine 134) interacts with NADP(+). One can recognise a KARI C-terminal knotted domain in the interval 183–328 (TFTEETETDL…RELRKLMSWV (146 aa)). 4 residues coordinate Mg(2+): aspartate 191, glutamate 195, glutamate 227, and glutamate 231. Serine 252 is a substrate binding site.

The protein belongs to the ketol-acid reductoisomerase family. Mg(2+) serves as cofactor.

It carries out the reaction (2R)-2,3-dihydroxy-3-methylbutanoate + NADP(+) = (2S)-2-acetolactate + NADPH + H(+). It catalyses the reaction (2R,3R)-2,3-dihydroxy-3-methylpentanoate + NADP(+) = (S)-2-ethyl-2-hydroxy-3-oxobutanoate + NADPH + H(+). Its pathway is amino-acid biosynthesis; L-isoleucine biosynthesis; L-isoleucine from 2-oxobutanoate: step 2/4. The protein operates within amino-acid biosynthesis; L-valine biosynthesis; L-valine from pyruvate: step 2/4. Involved in the biosynthesis of branched-chain amino acids (BCAA). Catalyzes an alkyl-migration followed by a ketol-acid reduction of (S)-2-acetolactate (S2AL) to yield (R)-2,3-dihydroxy-isovalerate. In the isomerase reaction, S2AL is rearranged via a Mg-dependent methyl migration to produce 3-hydroxy-3-methyl-2-ketobutyrate (HMKB). In the reductase reaction, this 2-ketoacid undergoes a metal-dependent reduction by NADPH to yield (R)-2,3-dihydroxy-isovalerate. The polypeptide is Ketol-acid reductoisomerase (NADP(+)) (Streptomyces griseus subsp. griseus (strain JCM 4626 / CBS 651.72 / NBRC 13350 / KCC S-0626 / ISP 5235)).